The following is a 238-amino-acid chain: Octanoyltransferase (238 aa).

Positions 40 to 220 constitute a BPL/LPL catalytic domain; that stretch reads AGGSDALLLL…RVCDALDGRL (181 aa). Residues 78-85, 150-152, and 163-165 contribute to the substrate site; these read RGGKITWH, AIG, and GFA. C181 acts as the Acyl-thioester intermediate in catalysis.

The protein belongs to the LipB family.

The protein resides in the cytoplasm. It catalyses the reaction octanoyl-[ACP] + L-lysyl-[protein] = N(6)-octanoyl-L-lysyl-[protein] + holo-[ACP] + H(+). Its pathway is protein modification; protein lipoylation via endogenous pathway; protein N(6)-(lipoyl)lysine from octanoyl-[acyl-carrier-protein]: step 1/2. Its function is as follows. Catalyzes the transfer of endogenously produced octanoic acid from octanoyl-acyl-carrier-protein onto the lipoyl domains of lipoate-dependent enzymes. Lipoyl-ACP can also act as a substrate although octanoyl-ACP is likely to be the physiological substrate. This is Octanoyltransferase from Mycobacterium sp. (strain JLS).